Consider the following 239-residue polypeptide: Ribonuclease PH (239 aa).

Residues arginine 87 and 125–127 (GTR) contribute to the phosphate site.

It belongs to the RNase PH family. Homohexameric ring arranged as a trimer of dimers.

It catalyses the reaction tRNA(n+1) + phosphate = tRNA(n) + a ribonucleoside 5'-diphosphate. Its function is as follows. Phosphorolytic 3'-5' exoribonuclease that plays an important role in tRNA 3'-end maturation. Removes nucleotide residues following the 3'-CCA terminus of tRNAs; can also add nucleotides to the ends of RNA molecules by using nucleoside diphosphates as substrates, but this may not be physiologically important. Probably plays a role in initiation of 16S rRNA degradation (leading to ribosome degradation) during starvation. The sequence is that of Ribonuclease PH from Ectopseudomonas mendocina (strain ymp) (Pseudomonas mendocina).